Consider the following 455-residue polypeptide: NADH-quinone oxidoreductase subunit N (455 aa).

11 consecutive transmembrane segments (helical) span residues 25 to 45, 61 to 81, 99 to 119, 149 to 169, 193 to 213, 257 to 277, 285 to 305, 312 to 332, 355 to 375, 391 to 411, and 432 to 452; these read AIVP…ISEY, FSVA…ALSH, VFLL…MFFL, FLMG…IYGA, IGIV…PFHF, IQII…IMAL, MFAF…LLTS, LYYA…VMYV, AGIL…SGFF, IVVF…FKII, and IVAV…NVVL.

It belongs to the complex I subunit 2 family. NDH-1 is composed of 14 different subunits. Subunits NuoA, H, J, K, L, M, N constitute the membrane sector of the complex.

The protein localises to the cell inner membrane. It carries out the reaction a quinone + NADH + 5 H(+)(in) = a quinol + NAD(+) + 4 H(+)(out). In terms of biological role, NDH-1 shuttles electrons from NADH, via FMN and iron-sulfur (Fe-S) centers, to quinones in the respiratory chain. The immediate electron acceptor for the enzyme in this species is believed to be a menaquinone. Couples the redox reaction to proton translocation (for every two electrons transferred, four hydrogen ions are translocated across the cytoplasmic membrane), and thus conserves the redox energy in a proton gradient. The sequence is that of NADH-quinone oxidoreductase subunit N from Flavobacterium psychrophilum (strain ATCC 49511 / DSM 21280 / CIP 103535 / JIP02/86).